Here is a 699-residue protein sequence, read N- to C-terminus: Fervidolysin (699 aa).

Positions 1–21 (MRKVLLIASIVALILALFSCA) are cleaved as a signal peptide. Positions 22 to 149 (NPSFEPRSKA…MYKIRKPGLN (128 aa)) are excised as a propeptide. E157 contacts Ca(2+). The region spanning 163-465 (LWGLEAIGVT…YGLVKLDAAL (303 aa)) is the Peptidase S8 domain. D190 functions as the Charge relay system in the catalytic mechanism. D199 contributes to the Ca(2+) binding site. H228 acts as the Charge relay system in catalysis. K239, D241, K243, and I245 together coordinate Ca(2+). S409 acts as the Charge relay system in catalysis.

This sequence belongs to the peptidase S8 family. Undergoes auto-proteolytic processing. Once cleaved, the propeptide can remain associated with the protease and blocks its activity. The physiological activation of fervidolysin is proposed to be achieved through the stepwise removal of the propeptide accomplished by several proteolytic cleavages that may not be autolytic.

The protein resides in the cell surface. Its activity is regulated as follows. Is inhibited by phenylmethylsulfonyl fluoride and 3,4-dichloroisocoumarin. EDTA and iodoacetate (1 to 5 mM) have only little effect on the enzyme activity. In terms of biological role, protease able to degrade keratin into peptides. Is responsible for keratinolysis by F.pennivorans, which allows this bacterium to grow on native feathers. This chain is Fervidolysin, found in Fervidobacterium pennivorans.